Consider the following 382-residue polypeptide: Anhydro-N-acetylmuramic acid kinase (382 aa).

22-29 (GTSMDGVD) serves as a coordination point for ATP.

The protein belongs to the anhydro-N-acetylmuramic acid kinase family.

It carries out the reaction 1,6-anhydro-N-acetyl-beta-muramate + ATP + H2O = N-acetyl-D-muramate 6-phosphate + ADP + H(+). The protein operates within amino-sugar metabolism; 1,6-anhydro-N-acetylmuramate degradation. Its pathway is cell wall biogenesis; peptidoglycan recycling. In terms of biological role, catalyzes the specific phosphorylation of 1,6-anhydro-N-acetylmuramic acid (anhMurNAc) with the simultaneous cleavage of the 1,6-anhydro ring, generating MurNAc-6-P. Is required for the utilization of anhMurNAc either imported from the medium or derived from its own cell wall murein, and thus plays a role in cell wall recycling. This Burkholderia vietnamiensis (strain G4 / LMG 22486) (Burkholderia cepacia (strain R1808)) protein is Anhydro-N-acetylmuramic acid kinase.